We begin with the raw amino-acid sequence, 151 residues long: Transcriptional regulator MraZ (151 aa).

SpoVT-AbrB domains are found at residues 5-52 and 81-124; these read ANAI…PLSE and AVDL…DEDA.

Belongs to the MraZ family. As to quaternary structure, forms oligomers.

It is found in the cytoplasm. Its subcellular location is the nucleoid. In Pseudomonas syringae pv. syringae (strain B728a), this protein is Transcriptional regulator MraZ.